We begin with the raw amino-acid sequence, 265 residues long: Undecaprenyl-diphosphatase (265 aa).

Helical transmembrane passes span 1–21, 39–59, 87–107, 110–130, 144–164, 187–207, 217–237, and 244–264; these read MDFLQSIILGIIQGITEFLPI, QGVGFDLAVHVGTLLAVILYF, WAVVVGTIPACIAGILLLDYI, ALRAVGVIITTTVVFAVLLAA, IGFKDAIIVGLAQAVALIPGT, FSFFMAIPITAAAALVKLLTI, LGFLVGGIVSFLTAITAIHFF, and FGMWPYVIYRLVLAVVLYLLF.

The protein belongs to the UppP family.

The protein localises to the cell inner membrane. It catalyses the reaction di-trans,octa-cis-undecaprenyl diphosphate + H2O = di-trans,octa-cis-undecaprenyl phosphate + phosphate + H(+). In terms of biological role, catalyzes the dephosphorylation of undecaprenyl diphosphate (UPP). Confers resistance to bacitracin. The protein is Undecaprenyl-diphosphatase of Idiomarina loihiensis (strain ATCC BAA-735 / DSM 15497 / L2-TR).